The primary structure comprises 365 residues: 3-isopropylmalate dehydrogenase (365 aa).

Residue 80 to 91 (GPKWGTGSVRPE) participates in NAD(+) binding. Substrate contacts are provided by arginine 98, arginine 108, arginine 137, and aspartate 226. The Mg(2+) site is built by aspartate 226, aspartate 251, and aspartate 255. Residue 290–301 (GSAPDLPKGKVN) coordinates NAD(+).

Belongs to the isocitrate and isopropylmalate dehydrogenases family. As to quaternary structure, homodimer. Mg(2+) is required as a cofactor. Mn(2+) serves as cofactor.

The protein resides in the cytoplasm. The enzyme catalyses (2R,3S)-3-isopropylmalate + NAD(+) = 4-methyl-2-oxopentanoate + CO2 + NADH. It functions in the pathway amino-acid biosynthesis; L-leucine biosynthesis; L-leucine from 3-methyl-2-oxobutanoate: step 3/4. Functionally, catalyzes the oxidation of 3-carboxy-2-hydroxy-4-methylpentanoate (3-isopropylmalate) to 3-carboxy-4-methyl-2-oxopentanoate. The product decarboxylates to 4-methyl-2 oxopentanoate. The polypeptide is 3-isopropylmalate dehydrogenase (LEU2) (Maudiozyma exigua (Yeast)).